The primary structure comprises 108 residues: Glutaredoxin-1 (108 aa).

Positions 3–106 constitute a Glutaredoxin domain; sequence EEFVQQRLAN…DILLSIGVLR (104 aa). Cysteines 23 and 26 form a disulfide.

This sequence belongs to the glutaredoxin family.

It is found in the virion. Functionally, displays thioltransferase and dehydroascorbate reductase activities. This chain is Glutaredoxin-1 (OPG075), found in Cynomys gunnisoni (Gunnison's prairie dog).